A 303-amino-acid polypeptide reads, in one-letter code: Glutathione transport system permease protein GsiD (303 aa).

The next 6 membrane-spanning stretches (helical) occupy residues 40 to 60, 105 to 125, 144 to 164, 165 to 185, 222 to 242, and 266 to 286; these read AMTAALFVILLIVVAIFARWI, LAAGVFAVFIGAAIGTLLGLL, LFAFPGILLAIAVVAVLGSGI, ANVIIAVAIFSIPAFARLVRG, IVVFFTMRIGTSIISAASLSF, and VIAPHVAVFPALAIFLTVLAF. Residues 101 to 290 enclose the ABC transmembrane type-1 domain; it reads AQISLAAGVF…LTVLAFNLLG (190 aa).

The protein belongs to the binding-protein-dependent transport system permease family. In terms of assembly, the complex is composed of two ATP-binding proteins (GsiA), two transmembrane proteins (GsiC and GsiD) and a solute-binding protein (GsiB).

It localises to the cell inner membrane. Its function is as follows. Part of the ABC transporter complex GsiABCD involved in glutathione import. Probably responsible for the translocation of the substrate across the membrane. The protein is Glutathione transport system permease protein GsiD of Escherichia coli O6:K15:H31 (strain 536 / UPEC).